Consider the following 535-residue polypeptide: Doublesex- and mab-3-related transcription factor A2 (535 aa).

Positions 69–116 (CARCRNHGVVSALKGHKRYCRWKDCLCAKCTLIAERQRVMAAQVALRR) form a DNA-binding region, DM. A disordered region spans residues 200–315 (LQAGRPGSPQ…GGPGPRQRTP (116 aa)). A DMA domain is found at 313 to 348 (RTPLDILTRVFPGHRRGVLELVLQGCGGDVVQAIEQ).

This sequence belongs to the DMRT family.

It is found in the nucleus. Functionally, may be involved in sexual development. This Bos taurus (Bovine) protein is Doublesex- and mab-3-related transcription factor A2 (DMRTA2).